Consider the following 750-residue polypeptide: MENNSFNVLANNNMSSFPLFNSKIEPSIAPALIAVAPIAKYLATALAKWALKQGFAKLKSEIFPGNETATMEKVRLEVQTILNQTLQTDRVATLKAEYEGFIHLGKVFTDYVSQSTFTPATAKTHFLNMSNLLIQRLPQFEIAGYEGVSISLFTQMCTLHLGLLKDGILAGSDWGFTPEDKDSLICQFNRYVNEYNTRMMGLYSIEFGRLLAKNLNEALNFRNMCSLYVFPFSEAWYLLRYEGTKLENTLSLWNFVGEDIGGILHNDWKGALYKLLMGATNQRLANVRFNYSYFSDTQGTIHRENILGAHPTYNGEQTPTGWIGNGRLGRFSAPYSNELEITKVEQEITYNNKGDHSNSIVPANTRNEILTATVPITADPFFKTADINWRYFSQGLYYGWNIKFDDRVILNSRVPGGIPSNRLEYDGYYIRAVSACPRNVPLSYNHNYLTLTYNRLEYDAPTTQNIIVGFSPNNTKSFYARNSHYLSATNDAYVIPALQFATVSDRSFLEDTPDQATDGSIKFTETVLGNEAKYSIRLNTGFNTATRYRLVIRFKATARLAAGIRVRSQNSGNNRLLGGIPVEGNSGWVDYITDSFTFNDLGITTASTNAFFSIDSDGVNASQQWYLSKLILVKDFVNNSGFRNQVPLAPYVIARCPNTFFVSNNTSSGYEQGYNDNYNQNTSSGYEQGYNDNYNQNTSSGYEQGYNDNYNQNTSSGYEQGYNDNYNQNTSSGYEQGYNDNYNQNTSSGV.

The segment at Gln-672–Val-750 is disordered.

This sequence belongs to the delta endotoxin family.

In terms of biological role, promotes colloidosmotic lysis by binding to the midgut epithelial cells of mosquito larvae such as Aedes aegypti, Anopheles albimanus and Culex quinquefasciatus. The protein is Pesticidal crystal protein Cry11Bb (cry11Bb) of Bacillus thuringiensis subsp. medellin.